Consider the following 1482-residue polypeptide: Cystic fibrosis transmembrane conductance regulator (1482 aa).

The Cytoplasmic portion of the chain corresponds to 1 to 77; the sequence is MQRSPLEKAN…KLINALRRCF (77 aa). Residues 78–98 form a helical membrane-spanning segment; sequence FWRFVFHGIILYLGEVTKAVQ. An ABC transmembrane type-1 1 domain is found at 81 to 365; sequence FVFHGIILYL…WAVQTWYDSL (285 aa). The Extracellular segment spans residues 99–122; the sequence is PLLLGRIIASYDPDNKVERSIAIY. The helical transmembrane segment at 123–146 threads the bilayer; it reads LGIGLCLLFIVRTLLLHPAIFGLH. The Cytoplasmic portion of the chain corresponds to 147–195; sequence HMGMQMRIALFSLIYKKTLKLSSRVLDKISTGQLISLLSNNLNKFDEGL. A helical membrane pass occupies residues 196 to 216; that stretch reads ALAHFVWIVPLQVVLLMGLLW. Topologically, residues 217-222 are extracellular; that stretch reads DLLQAS. A helical membrane pass occupies residues 223 to 243; sequence AFCGLAFLIVLALFQAWLGQM. Over 244 to 298 the chain is Cytoplasmic; it reads MMKYRERRAGKINERLVITSEMIDNIQSVKAYCWEEAMEKMIENLRETELKLTRK. Residues 299 to 319 traverse the membrane as a helical segment; that stretch reads TAYVRYFNSSAFFFSGFFVVF. Topologically, residues 320 to 339 are extracellular; the sequence is LAVLPYALIKGIILRKIFTT. Residues 340–358 traverse the membrane as a helical segment; it reads ISFCIVLRMAVTRQFPWAV. Residues 359–859 lie on the Cytoplasmic side of the membrane; that stretch reads QTWYDSLGAI…YLRYITIHKN (501 aa). ATP is bound by residues W401, S434, 458–465, and Q493; that span reads GSTGAGKT. The region spanning 423–646 is the ABC transporter 1 domain; sequence NGDNGLFFSN…RPDFSSKLMG (224 aa). C524 is lipidated: S-palmitoyl cysteine. S549 and S660 each carry phosphoserine. The interval 654–832 is disordered R region; sequence SAERRSSILT…DEINEEDLKE (179 aa). Phosphoserine; by PKA is present on S670. S686 is subject to Phosphoserine. K688 is covalently cross-linked (Glycyl lysine isopeptide (Lys-Gly) (interchain with G-Cter in ubiquitin)). A phosphoserine mark is found at S700, S712, S737, S769, S796, and S814. The chain crosses the membrane as a helical span at residues 860–880; that stretch reads LVFVLIWCLVIFLVEVAASLV. Positions 860 to 1156 constitute an ABC transmembrane type-1 2 domain; the sequence is LVFVLIWCLV…AVNSSIDVDS (297 aa). At 881-919 the chain is on the extracellular side; it reads GLWLLEDISFKDKTNGTNGANNTFPVIITDTSKYYLFYI. Residues N895 and N901 are each glycosylated (N-linked (GlcNAc...) asparagine). Residues 920-940 traverse the membrane as a discontinuously helical segment; it reads YVGIADTFFALGIFRGLPLVH. Topologically, residues 941-991 are cytoplasmic; it reads TLISVSKILHHKMLYSVLKAPMSTFNTLKPGGILNRFSKDIAILDDLLPLT. The chain crosses the membrane as a helical span at residues 992–1012; it reads IFDFIQLILIVVGALIVVSAI. The Extracellular portion of the chain corresponds to 1013–1014; sequence RP. Residues 1015-1035 form a helical membrane-spanning segment; sequence YIFLATVPVIIAFIMLRAYFL. At 1036–1096 the chain is on the cytoplasmic side; that stretch reads QTSQQLKQLE…TASWFLYLST (61 aa). The chain crosses the membrane as a helical span at residues 1097–1117; sequence LRWFQMRIELVFVIFFIAVTF. At 1118–1131 the chain is on the extracellular side; sequence ISILTTGDGEGRVG. Residues 1132–1152 form a helical membrane-spanning segment; the sequence is ILLTLAMNIMSTLQWAVNSSI. Topologically, residues 1153 to 1482 are cytoplasmic; sequence DVDSLMRSVS…TEEEVQETRL (330 aa). The 234-residue stretch at 1212–1445 folds into the ABC transporter 2 domain; it reads MIVKDLTAKY…KSLYRQAISH (234 aa). Residues Y1221 and 1246 to 1253 each bind ATP; that span reads GRTGSGKS. The segment at 1388–1482 is interaction with GORASP2; the sequence is RVLKNAFANC…TEEEVQETRL (95 aa). C1397 is lipidated: S-palmitoyl cysteine. Phosphoserine occurs at positions 1446 and 1458. A PDZ-binding motif is present at residues 1480–1482; it reads TRL.

This sequence belongs to the ABC transporter superfamily. ABCC family. CFTR transporter (TC 3.A.1.202) subfamily. In terms of assembly, monomer; does not require oligomerization for channel activity. May form oligomers in the membrane. Interacts with SLC26A3, SLC26A6 and NHERF1. Interacts with SHANK2. Interacts with MYO6. Interacts (via C-terminus) with GOPC (via PDZ domain); this promotes CFTR internalization and thereby decreases channel activity. Interacts with SLC4A7 through NHERF1. Found in a complex with MYO5B and RAB11A. Interacts with ANO1. Interacts with SLC26A8. Interacts with AHCYL1; the interaction increases CFTR activity. Interacts with CSE1L. The core-glycosylated form interacts with GORASP2 (via PDZ GRASP-type 1 domain) in respone to ER stress. Interacts with MARCHF2; the interaction leads to CFTR ubiqtuitination and degradation. Interacts with ADGRG2. Post-translationally, N-glycosylated. In terms of processing, phosphorylated; cAMP treatment promotes phosphorylation and activates the channel. Dephosphorylation decreases the ATPase activity (in vitro). Phosphorylation at PKA sites activates the channel. Phosphorylation at PKC sites enhances the response to phosphorylation by PKA. Phosphorylated by AMPK; this inhibits channel activity. Ubiquitinated, leading to its degradation in the lysosome. Deubiquitination by USP10 in early endosomes enhances its endocytic recycling to the cell membrane. Ubiquitinated by RNF185 during ER stress. Ubiquitinated by MARCHF2.

Its subcellular location is the apical cell membrane. The protein resides in the early endosome membrane. It localises to the cell membrane. It is found in the recycling endosome membrane. The protein localises to the endoplasmic reticulum membrane. Its subcellular location is the nucleus. It carries out the reaction ATP + H2O + closed Cl(-) channel = ADP + phosphate + open Cl(-) channel.. It catalyses the reaction chloride(in) = chloride(out). The catalysed reaction is hydrogencarbonate(in) = hydrogencarbonate(out). The enzyme catalyses ATP + H2O = ADP + phosphate + H(+). Epithelial ion channel that plays an important role in the regulation of epithelial ion and water transport and fluid homeostasis. Mediates the transport of chloride ions across the cell membrane. Possesses an intrinsic ATPase activity and utilizes ATP to gate its channel; the passive flow of anions through the channel is gated by cycles of ATP binding and hydrolysis by the ATP-binding domains. The ion channel is also permeable to HCO(3)(-); selectivity depends on the extracellular chloride concentration. Exerts its function also by modulating the activity of other ion channels and transporters. Contributes to the regulation of the pH and the ion content of the epithelial fluid layer. Modulates the activity of the epithelial sodium channel (ENaC) complex, in part by regulating the cell surface expression of the ENaC complex. May regulate bicarbonate secretion and salvage in epithelial cells by regulating the transporter SLC4A7. Can inhibit the chloride channel activity of ANO1. Plays a role in the chloride and bicarbonate homeostasis during sperm epididymal maturation and capacitation. This Didelphis virginiana (North American opossum) protein is Cystic fibrosis transmembrane conductance regulator.